We begin with the raw amino-acid sequence, 515 residues long: Envelope glycoprotein (515 aa).

The first 33 residues, 1 to 33 (MPKERRSRRRPQPIIRWVSLTLTLLALCRPIQT), serve as a signal peptide directing secretion. Residues 34-435 (WRCSLSLGNQ…LGLTAWVRET (402 aa)) are Extracellular-facing. Residues N129 and N203 are each glycosylated (N-linked (GlcNAc...) asparagine; by host). The short motif at 212–215 (CAIC) is the CXXC element. 3 cysteine pairs are disulfide-bonded: C212–C215, C212–C392, and C384–C391. N230, N251, N256, N271, and N287 each carry an N-linked (GlcNAc...) asparagine; by host glycan. The interval 304 to 324 (VAALTLGLALSVGLTGINVAV) is fusion peptide. Coiled coils occupy residues 330-376 (QRLT…WLYI) and 388-420 (NEPCCFLRIQNDSIILRGDLQPLSQRVSTDWQW). N351 carries an N-linked (GlcNAc...) asparagine; by host glycan. The segment at 365–381 (AQNRRGLDWLYIRLGFQ) is immunosuppression. Residues 384 to 392 (CPTINEPCC) carry the CX6CC motif. N398 is a glycosylation site (N-linked (GlcNAc...) asparagine; by host). Residues 436 to 456 (IHSVLSLFLLALFLLFLAPCL) traverse the membrane as a helical segment. Residue C455 is the site of S-palmitoyl cysteine; by host attachment. Topologically, residues 457 to 515 (IKCLTSRLLKLLRQAPHFPEISLTPKPDSDYQALLPSAPEIYSHLSPVKPDYINLRPCP) are cytoplasmic.

As to quaternary structure, the mature envelope protein (Env) consists of a trimer of SU-TM heterodimers attached by a labile interchain disulfide bond. In terms of processing, specific enzymatic cleavages in vivo yield mature proteins. Envelope glycoproteins are synthesized as an inactive precursor that is N-glycosylated and processed likely by host cell furin or by a furin-like protease in the Golgi to yield the mature SU and TM proteins. The cleavage site between SU and TM requires the minimal sequence [KR]-X-[KR]-R. Post-translationally, the CXXC motif is highly conserved across a broad range of retroviral envelope proteins. It is thought to participate in the formation of a labile disulfide bond possibly with the CX6CC motif present in the transmembrane protein. Isomerization of the intersubunit disulfide bond to an SU intrachain disulfide bond is thought to occur upon receptor recognition in order to allow membrane fusion. The transmembrane protein is palmitoylated.

The protein resides in the virion membrane. Its subcellular location is the host cell membrane. Functionally, the surface protein (SU) attaches the virus to the host cell by binding to its receptor. This interaction triggers the refolding of the transmembrane protein (TM) and is thought to activate its fusogenic potential by unmasking its fusion peptide. Fusion occurs at the host cell plasma membrane. The transmembrane protein (TM) acts as a class I viral fusion protein. Under the current model, the protein has at least 3 conformational states: pre-fusion native state, pre-hairpin intermediate state, and post-fusion hairpin state. During viral and target cell membrane fusion, the coiled coil regions (heptad repeats) assume a trimer-of-hairpins structure, positioning the fusion peptide in close proximity to the C-terminal region of the ectodomain. The formation of this structure appears to drive apposition and subsequent fusion of viral and target cell membranes. Membranes fusion leads to delivery of the nucleocapsid into the cytoplasm. This chain is Envelope glycoprotein (env), found in Bos taurus (Bovine).